The sequence spans 372 residues: Tubby-like F-box protein 9 (372 aa).

The interval 1–51 is disordered; the sequence is MALWRCSSSWLSSVSRSSGGVGGGESKVSPEIAPVSGGEGEGEEEEGEEER. Over residues 7–18 the composition is skewed to low complexity; the sequence is SSSWLSSVSRSS. The segment covering 40–49 has biased composition (acidic residues); that stretch reads GEGEEEEGEE. In terms of domain architecture, F-box spans 50-105; the sequence is ERWSRLLPELLTEIMRRVDAGAERWPPRRDVVACACVCRRWRDAAVSVVRPPLECG.

The protein belongs to the TUB family. As to expression, ubiquitous.

The sequence is that of Tubby-like F-box protein 9 (TULP9) from Oryza sativa subsp. japonica (Rice).